The chain runs to 469 residues: Protein YfjI (469 aa).

This is Protein YfjI (yfjI) from Escherichia coli (strain K12).